Reading from the N-terminus, the 245-residue chain is 1-(5-phosphoribosyl)-5-[(5-phosphoribosylamino)methylideneamino] imidazole-4-carboxamide isomerase (245 aa).

Residue Asp-7 is the Proton acceptor of the active site. Asp-129 (proton donor) is an active-site residue.

The protein belongs to the HisA/HisF family.

The protein localises to the cytoplasm. The enzyme catalyses 1-(5-phospho-beta-D-ribosyl)-5-[(5-phospho-beta-D-ribosylamino)methylideneamino]imidazole-4-carboxamide = 5-[(5-phospho-1-deoxy-D-ribulos-1-ylimino)methylamino]-1-(5-phospho-beta-D-ribosyl)imidazole-4-carboxamide. Its pathway is amino-acid biosynthesis; L-histidine biosynthesis; L-histidine from 5-phospho-alpha-D-ribose 1-diphosphate: step 4/9. In Tolumonas auensis (strain DSM 9187 / NBRC 110442 / TA 4), this protein is 1-(5-phosphoribosyl)-5-[(5-phosphoribosylamino)methylideneamino] imidazole-4-carboxamide isomerase.